The primary structure comprises 487 residues: 3-octaprenyl-4-hydroxybenzoate carboxy-lyase (487 aa).

Asn-172 lines the Mn(2+) pocket. Residues 175–177 (IYR), 189–191 (RWL), and 194–195 (RG) contribute to the prenylated FMN site. Glu-238 lines the Mn(2+) pocket. The active-site Proton donor is the Asp-287.

The protein belongs to the UbiD family. In terms of assembly, homohexamer. Prenylated FMN is required as a cofactor. It depends on Mn(2+) as a cofactor.

The protein localises to the cell membrane. It catalyses the reaction a 4-hydroxy-3-(all-trans-polyprenyl)benzoate + H(+) = a 2-(all-trans-polyprenyl)phenol + CO2. The protein operates within cofactor biosynthesis; ubiquinone biosynthesis. Its function is as follows. Catalyzes the decarboxylation of 3-octaprenyl-4-hydroxy benzoate to 2-octaprenylphenol, an intermediate step in ubiquinone biosynthesis. The sequence is that of 3-octaprenyl-4-hydroxybenzoate carboxy-lyase from Dechloromonas aromatica (strain RCB).